We begin with the raw amino-acid sequence, 112 residues long: Large ribosomal subunit protein uL22 (112 aa).

Belongs to the universal ribosomal protein uL22 family. In terms of assembly, part of the 50S ribosomal subunit.

Its function is as follows. This protein binds specifically to 23S rRNA; its binding is stimulated by other ribosomal proteins, e.g. L4, L17, and L20. It is important during the early stages of 50S assembly. It makes multiple contacts with different domains of the 23S rRNA in the assembled 50S subunit and ribosome. The globular domain of the protein is located near the polypeptide exit tunnel on the outside of the subunit, while an extended beta-hairpin is found that lines the wall of the exit tunnel in the center of the 70S ribosome. This Nitratidesulfovibrio vulgaris (strain ATCC 29579 / DSM 644 / CCUG 34227 / NCIMB 8303 / VKM B-1760 / Hildenborough) (Desulfovibrio vulgaris) protein is Large ribosomal subunit protein uL22.